The sequence spans 215 residues: Pyrrolidone-carboxylate peptidase (215 aa).

Catalysis depends on residues Glu78, Cys141, and His165.

This sequence belongs to the peptidase C15 family. In terms of assembly, homotetramer.

The protein localises to the cytoplasm. The catalysed reaction is Release of an N-terminal pyroglutamyl group from a polypeptide, the second amino acid generally not being Pro.. Its function is as follows. Removes 5-oxoproline from various penultimate amino acid residues except L-proline. In Streptococcus pyogenes serotype M3 (strain SSI-1), this protein is Pyrrolidone-carboxylate peptidase.